Reading from the N-terminus, the 286-residue chain is Phosphoribosylaminoimidazole-succinocarboxamide synthase (286 aa).

It belongs to the SAICAR synthetase family.

The catalysed reaction is 5-amino-1-(5-phospho-D-ribosyl)imidazole-4-carboxylate + L-aspartate + ATP = (2S)-2-[5-amino-1-(5-phospho-beta-D-ribosyl)imidazole-4-carboxamido]succinate + ADP + phosphate + 2 H(+). Its pathway is purine metabolism; IMP biosynthesis via de novo pathway; 5-amino-1-(5-phospho-D-ribosyl)imidazole-4-carboxamide from 5-amino-1-(5-phospho-D-ribosyl)imidazole-4-carboxylate: step 1/2. This Pasteurella multocida (strain Pm70) protein is Phosphoribosylaminoimidazole-succinocarboxamide synthase (purC).